Reading from the N-terminus, the 188-residue chain is dCTP deaminase (188 aa).

109–114 (KSTYAR) contributes to the dCTP binding site. Glutamate 135 acts as the Proton donor/acceptor in catalysis. Residues glutamine 154, tyrosine 168, and glutamine 178 each coordinate dCTP.

The protein belongs to the dCTP deaminase family. As to quaternary structure, homotrimer.

The enzyme catalyses dCTP + H2O + H(+) = dUTP + NH4(+). The protein operates within pyrimidine metabolism; dUMP biosynthesis; dUMP from dCTP (dUTP route): step 1/2. In terms of biological role, catalyzes the deamination of dCTP to dUTP. The protein is dCTP deaminase of Helicobacter acinonychis (strain Sheeba).